The sequence spans 73 residues: Venom protein 55.1 (73 aa).

The signal sequence occupies residues 1–19 (MNFLCILFVVSLISSLSKC). Position 57 is a proline amide (proline 57). A propeptide spanning residues 61 to 73 (RRSFDLYALVNAK) is cleaved from the precursor.

It belongs to the diuretic hormone class 2 family. As to expression, expressed by the venom gland.

The protein localises to the secreted. Regulates fluid secretion. The sequence is that of Venom protein 55.1 from Lychas mucronatus (Chinese swimming scorpion).